A 179-amino-acid polypeptide reads, in one-letter code: Large ribosomal subunit protein uL5 (179 aa).

This sequence belongs to the universal ribosomal protein uL5 family. In terms of assembly, part of the 50S ribosomal subunit; part of the 5S rRNA/L5/L18/L25 subcomplex. Contacts the 5S rRNA and the P site tRNA. Forms a bridge to the 30S subunit in the 70S ribosome.

Functionally, this is one of the proteins that bind and probably mediate the attachment of the 5S RNA into the large ribosomal subunit, where it forms part of the central protuberance. In the 70S ribosome it contacts protein S13 of the 30S subunit (bridge B1b), connecting the 2 subunits; this bridge is implicated in subunit movement. Contacts the P site tRNA; the 5S rRNA and some of its associated proteins might help stabilize positioning of ribosome-bound tRNAs. This chain is Large ribosomal subunit protein uL5, found in Parasynechococcus marenigrum (strain WH8102).